We begin with the raw amino-acid sequence, 1072 residues long: DNA-directed RNA polymerase subunit beta (1072 aa).

The protein belongs to the RNA polymerase beta chain family. In terms of assembly, in plastids the minimal PEP RNA polymerase catalytic core is composed of four subunits: alpha, beta, beta', and beta''. When a (nuclear-encoded) sigma factor is associated with the core the holoenzyme is formed, which can initiate transcription.

Its subcellular location is the plastid. It localises to the chloroplast. The catalysed reaction is RNA(n) + a ribonucleoside 5'-triphosphate = RNA(n+1) + diphosphate. In terms of biological role, DNA-dependent RNA polymerase catalyzes the transcription of DNA into RNA using the four ribonucleoside triphosphates as substrates. In Olimarabidopsis pumila (Dwarf rocket), this protein is DNA-directed RNA polymerase subunit beta.